The primary structure comprises 361 residues: MAIKRSGNNNLSPNVKSDLLSPEVIPQERSTSPELEQQEASLRPQRLADYIGQRDLKEVLRIAIQAAQGRQEAIDHLLLYGPPGLGKTTLALILAEEMQVRCKITAAPALERPRDITGLLLALQPGDILFIDEIHRLNRLTEELLYPAMEDFRLDITMGKGQSAKVRSLKLAHFTLVGATTKVGSLTSPLRDRFGLIQRLRFYEVDELQQIILRTAGILSVSISPTGAEAIAMRARGTPRIANRLLKRVRDYAQVKQQPEIDPALASEALDLYQVDKRGLDWTDRLVLQTLIEQFQGGPTGLEAIAAATGEDAKTIEEVYEPYLLQIGYLARTSRGRIATTAAYEHLGLTPPTPLLPWKES.

Composition is skewed to polar residues over residues 1 to 15 (MAIK…SPNV) and 28 to 40 (ERST…QQEA). The tract at residues 1-41 (MAIKRSGNNNLSPNVKSDLLSPEVIPQERSTSPELEQQEAS) is disordered. The tract at residues 13–203 (PNVKSDLLSP…FGLIQRLRFY (191 aa)) is large ATPase domain (RuvB-L). Residues L42, R43, G84, K87, T88, T89, 150–152 (EDF), R193, Y203, and R240 contribute to the ATP site. T88 provides a ligand contact to Mg(2+). The tract at residues 204 to 274 (EVDELQQIIL…LASEALDLYQ (71 aa)) is small ATPAse domain (RuvB-S). Residues 277 to 361 (KRGLDWTDRL…PTPLLPWKES (85 aa)) are head domain (RuvB-H). Residues R332 and R337 each contribute to the DNA site.

This sequence belongs to the RuvB family. Homohexamer. Forms an RuvA(8)-RuvB(12)-Holliday junction (HJ) complex. HJ DNA is sandwiched between 2 RuvA tetramers; dsDNA enters through RuvA and exits via RuvB. An RuvB hexamer assembles on each DNA strand where it exits the tetramer. Each RuvB hexamer is contacted by two RuvA subunits (via domain III) on 2 adjacent RuvB subunits; this complex drives branch migration. In the full resolvosome a probable DNA-RuvA(4)-RuvB(12)-RuvC(2) complex forms which resolves the HJ.

The protein resides in the cytoplasm. The enzyme catalyses ATP + H2O = ADP + phosphate + H(+). The RuvA-RuvB-RuvC complex processes Holliday junction (HJ) DNA during genetic recombination and DNA repair, while the RuvA-RuvB complex plays an important role in the rescue of blocked DNA replication forks via replication fork reversal (RFR). RuvA specifically binds to HJ cruciform DNA, conferring on it an open structure. The RuvB hexamer acts as an ATP-dependent pump, pulling dsDNA into and through the RuvAB complex. RuvB forms 2 homohexamers on either side of HJ DNA bound by 1 or 2 RuvA tetramers; 4 subunits per hexamer contact DNA at a time. Coordinated motions by a converter formed by DNA-disengaged RuvB subunits stimulates ATP hydrolysis and nucleotide exchange. Immobilization of the converter enables RuvB to convert the ATP-contained energy into a lever motion, pulling 2 nucleotides of DNA out of the RuvA tetramer per ATP hydrolyzed, thus driving DNA branch migration. The RuvB motors rotate together with the DNA substrate, which together with the progressing nucleotide cycle form the mechanistic basis for DNA recombination by continuous HJ branch migration. Branch migration allows RuvC to scan DNA until it finds its consensus sequence, where it cleaves and resolves cruciform DNA. Its function is as follows. Participates in UV-tolerance of Synechocystis PCC 6803. This Synechocystis sp. (strain ATCC 27184 / PCC 6803 / Kazusa) protein is Holliday junction branch migration complex subunit RuvB.